Here is a 158-residue protein sequence, read N- to C-terminus: Cyclic pyranopterin monophosphate synthase (158 aa).

Substrate-binding positions include 75–77 (LCH) and 113–114 (ME). Aspartate 128 is a catalytic residue.

The protein belongs to the MoaC family. As to quaternary structure, homohexamer; trimer of dimers.

It carries out the reaction (8S)-3',8-cyclo-7,8-dihydroguanosine 5'-triphosphate = cyclic pyranopterin phosphate + diphosphate. Its pathway is cofactor biosynthesis; molybdopterin biosynthesis. Catalyzes the conversion of (8S)-3',8-cyclo-7,8-dihydroguanosine 5'-triphosphate to cyclic pyranopterin monophosphate (cPMP). In Azorhizobium caulinodans (strain ATCC 43989 / DSM 5975 / JCM 20966 / LMG 6465 / NBRC 14845 / NCIMB 13405 / ORS 571), this protein is Cyclic pyranopterin monophosphate synthase.